The sequence spans 767 residues: 5-methyltetrahydropteroyltriglutamate--homocysteine methyltransferase (767 aa).

Residue Lys126 participates in 5-methyltetrahydropteroyltri-L-glutamate binding. L-homocysteine is bound by residues 445–447 (IGS) and Glu498. L-methionine is bound by residues 445-447 (IGS) and Glu498. Residues 529-530 (RC) and Trp575 contribute to the 5-methyltetrahydropteroyltri-L-glutamate site. An L-homocysteine-binding site is contributed by Asp613. Asp613 contributes to the L-methionine binding site. Glu619 serves as a coordination point for 5-methyltetrahydropteroyltri-L-glutamate. His655, Cys657, and Glu679 together coordinate Zn(2+). The Proton donor role is filled by His708. A Zn(2+)-binding site is contributed by Cys740.

The protein belongs to the vitamin-B12 independent methionine synthase family. It depends on Zn(2+) as a cofactor.

It carries out the reaction 5-methyltetrahydropteroyltri-L-glutamate + L-homocysteine = tetrahydropteroyltri-L-glutamate + L-methionine. The protein operates within amino-acid biosynthesis; L-methionine biosynthesis via de novo pathway; L-methionine from L-homocysteine (MetE route): step 1/1. Functionally, catalyzes the transfer of a methyl group from 5-methyltetrahydrofolate to homocysteine resulting in methionine formation. In Psychromonas ingrahamii (strain DSM 17664 / CCUG 51855 / 37), this protein is 5-methyltetrahydropteroyltriglutamate--homocysteine methyltransferase.